The sequence spans 354 residues: Trans-enoyl reductase pydC (354 aa).

Residues 16–342 enclose the Enoyl reductase (ER) domain; sequence ANTDPVTFEI…RREVSGEKIV (327 aa). NADP(+) is bound by residues 51-54, 180-183, Tyr-198, 245-246, and 336-337; these read CDYK, SPKN, FE, and VS.

This sequence belongs to the zinc-containing alcohol dehydrogenase family. In terms of assembly, monomer.

The protein operates within mycotoxin biosynthesis. Functionally, trans-enoyl reductase; part of the gene cluster that mediates the biosynthesis of pyrrocidines, fungal natural products containing a macrocyclic para-cyclophane connected to a decahydrofluorene ring system that show potent antibiotic activities toward Gram-negative bacteria. Within the pathway, the PKS-NRPS pydA, with the help of the trans-enoyl reductase pydC, synthesize the polyketide-tyrosyl acyl thioester product which can be reductively off-loaded by the terminal reductase (R) domain in pydA. The PKS module of pydA acts in combination with the trans-acting enoyl reductase pydC to produce a methylated polyketide attached to the ACP domain. In parallel, the adenylation (A) domain of the NRPS module activated L-tyrosine, which is then transferred to the ACP domain. The condensation (C) domain subsequently link this group to the polyketide chain, forming an enzyme-bound amide. The alpha/beta hydrolase pydG is then required to catalyze the subsequent Knoevenagel condensation that affords the 3-pyrrolin-2-one ring, whereas the four proteins pydB, pydE, pydX and pydZ then function synergistically to form the cyclophane. PydB and the membrane-bound pydX and pydZ are lipid-binding proteins that can sequester and mold the pdyG product into the inverse S-shape. Binding of the medium chain reductase pydE to the complex would trigger the cascade oxidative cyclization. PydY is involved in the Diels-Alder cycloaddition that forms the decahydrofluorene core. Additional non-enzymatic hydroxylation yields pyrrocidine A2 which can be further reduced into pyrrocidine B by an endogenous reductase. The sequence is that of Trans-enoyl reductase pydC from Acremonium sp.